A 456-amino-acid polypeptide reads, in one-letter code: Putative F-box/FBD/LRR-repeat protein At1g66300 (456 aa).

A disordered region spans residues 1–23 (MDEDGEKRVRTKRLCSPESSDKK). The region spanning 28–74 (VDWVRDLPESLICHVLLNLSTKDVIKNCVLSTKWRYLWRYVPGLDLD) is the F-box domain. LRR repeat units lie at residues 136-163 (HLDL…KLCG), 185-210 (VKFA…TLCR), 234-260 (PNTM…TLSH), and 347-372 (FYED…VVGS). Positions 377 to 429 (MERTSIISGHRCLLSSLEYVEIETPLTGEVFEMKLVSYLLENSPILKKLTIHL) constitute an FBD domain.

This chain is Putative F-box/FBD/LRR-repeat protein At1g66300, found in Arabidopsis thaliana (Mouse-ear cress).